A 257-amino-acid polypeptide reads, in one-letter code: Imidazole glycerol phosphate synthase subunit HisF (257 aa).

Residues Asp-11 and Asp-130 contribute to the active site.

Belongs to the HisA/HisF family. Heterodimer of HisH and HisF.

The protein resides in the cytoplasm. The enzyme catalyses 5-[(5-phospho-1-deoxy-D-ribulos-1-ylimino)methylamino]-1-(5-phospho-beta-D-ribosyl)imidazole-4-carboxamide + L-glutamine = D-erythro-1-(imidazol-4-yl)glycerol 3-phosphate + 5-amino-1-(5-phospho-beta-D-ribosyl)imidazole-4-carboxamide + L-glutamate + H(+). The protein operates within amino-acid biosynthesis; L-histidine biosynthesis; L-histidine from 5-phospho-alpha-D-ribose 1-diphosphate: step 5/9. Functionally, IGPS catalyzes the conversion of PRFAR and glutamine to IGP, AICAR and glutamate. The HisF subunit catalyzes the cyclization activity that produces IGP and AICAR from PRFAR using the ammonia provided by the HisH subunit. In Vibrio cholerae serotype O1 (strain ATCC 39541 / Classical Ogawa 395 / O395), this protein is Imidazole glycerol phosphate synthase subunit HisF.